The sequence spans 32 residues: Sodium channel neurotoxin BmK NT2 (32 aa).

Residues 2–32 (RDAYIAKPENCVYHCAGNEGCNNLCTCNGAT) form the LCN-type CS-alpha/beta domain.

Expressed by the venom gland.

Its subcellular location is the secreted. Alpha toxins bind voltage-independently at site-3 of sodium channels (Nav) and inhibit the inactivation of the activated channels, thereby blocking neuronal transmission. This toxin dose-dependently delays inactivation of voltage-gated sodium channels (Nav) (EC(50)=0.91 uM), and shifts the steady-state activation and inactivation to hyperpolarized direction. In addition, it dose-dependently alters calcium dynamics and increases phosphorylation of MAP kinases 1/3 (MAPK1/MAPK3) and cAMP-response element binding (CREB) proteins in neocortical neurons. This effect is eliminated by tetrodotoxin, a Nav blocker. This chain is Sodium channel neurotoxin BmK NT2, found in Olivierus martensii (Manchurian scorpion).